The sequence spans 248 residues: E3 SUMO-protein ligase NSE2 (248 aa).

Residue M1 is modified to N-acetylmethionine. Residues K92 and K109 each participate in a glycyl lysine isopeptide (Lys-Gly) (interchain with G-Cter in SUMO2) cross-link. Phosphoserine is present on S118. Residues K127 and K132 each participate in a glycyl lysine isopeptide (Lys-Gly) (interchain with G-Cter in SUMO2) cross-link. An SP-RING-type zinc finger spans residues 156 to 242 (VDEDMIVTQS…LRRAIESHKK (87 aa)). Zn(2+)-binding residues include C187, H189, C212, and C217.

Belongs to the NSE2 family. Component of the SMC5-SMC6 complex which consists at least of SMC5, SMC6, NSMCE2, NSMCE1, NSMCE4A or EID3 and NSMCE3. Sumoylated, possibly via autosumoylation.

The protein localises to the nucleus. The protein resides in the chromosome. It localises to the telomere. It is found in the PML body. The protein operates within protein modification; protein sumoylation. Functionally, E3 SUMO-protein ligase component of the SMC5-SMC6 complex, a complex involved in DNA double-strand break repair by homologous recombination. Is not be required for the stability of the complex. The complex may promote sister chromatid homologous recombination by recruiting the SMC1-SMC3 cohesin complex to double-strand breaks. Acts as an E3 ligase mediating SUMO attachment to various proteins such as SMC6L1 and TSNAX, the shelterin complex subunits TERF1, TERF2, TINF2 and TERF2IP, RAD51AP1, and maybe the cohesin components RAD21 and STAG2. Required for recruitment of telomeres to PML nuclear bodies. Required for sister chromatid cohesion during prometaphase and mitotic progression. This is E3 SUMO-protein ligase NSE2 (NSMCE2) from Bos taurus (Bovine).